Consider the following 650-residue polypeptide: Acetyl-coenzyme A synthetase (650 aa).

Residues 190–193, Thr-308, and Asn-332 each bind CoA; that span reads RGGR. Residues 384 to 386, 408 to 413, Asp-497, and Arg-512 each bind ATP; these read GEP and DTWWQT. CoA is bound at residue Ser-520. Arg-523 serves as a coordination point for ATP. Positions 534, 536, and 539 each coordinate Mg(2+). Residue Arg-581 coordinates CoA. Lys-606 carries the N6-acetyllysine modification.

The protein belongs to the ATP-dependent AMP-binding enzyme family. Requires Mg(2+) as cofactor. In terms of processing, acetylated. Deacetylation by the SIR2-homolog deacetylase activates the enzyme.

It carries out the reaction acetate + ATP + CoA = acetyl-CoA + AMP + diphosphate. Catalyzes the conversion of acetate into acetyl-CoA (AcCoA), an essential intermediate at the junction of anabolic and catabolic pathways. AcsA undergoes a two-step reaction. In the first half reaction, AcsA combines acetate with ATP to form acetyl-adenylate (AcAMP) intermediate. In the second half reaction, it can then transfer the acetyl group from AcAMP to the sulfhydryl group of CoA, forming the product AcCoA. The protein is Acetyl-coenzyme A synthetase of Bradyrhizobium sp. (strain ORS 278).